Here is a 69-residue protein sequence, read N- to C-terminus: Snake venom metalloproteinase BnP2 (69 aa).

The region spanning 1 to 69 (YIELAVVADH…EWRERDIIPR (69 aa)) is the Peptidase M12B domain. E3 is a Ca(2+) binding site.

This sequence belongs to the venom metalloproteinase (M12B) family. P-I subfamily. In terms of assembly, monomer. It depends on Zn(2+) as a cofactor. As to expression, expressed by the venom gland.

The protein localises to the secreted. With respect to regulation, inhibited by EDTA. In terms of biological role, this protein is a zinc protease from snake venom that is devoid of significant myotoxic and hemorrhagic activities. It hydrolyzes the Aalpha-chain and more slowly the Bbeta-chain of fibrin and fibrinogen, without affecting the gamma-chains. It induces cell detachment and a apoptosis (anoikis) in endothelial cells. This is Snake venom metalloproteinase BnP2 from Bothrops pauloensis (Neuwied's lancehead).